The chain runs to 544 residues: Chaperonin GroEL (544 aa).

ATP-binding positions include Thr-30–Pro-33, Asp-87–Thr-91, Gly-414, Asn-478–Leu-480, and Asp-494.

It belongs to the chaperonin (HSP60) family. Forms a cylinder of 14 subunits composed of two heptameric rings stacked back-to-back. Interacts with the co-chaperonin GroES.

The protein resides in the cytoplasm. It catalyses the reaction ATP + H2O + a folded polypeptide = ADP + phosphate + an unfolded polypeptide.. Together with its co-chaperonin GroES, plays an essential role in assisting protein folding. The GroEL-GroES system forms a nano-cage that allows encapsulation of the non-native substrate proteins and provides a physical environment optimized to promote and accelerate protein folding. The sequence is that of Chaperonin GroEL from Pelotomaculum thermopropionicum (strain DSM 13744 / JCM 10971 / SI).